Reading from the N-terminus, the 502-residue chain is Keratin, type II cytoskeletal 8 (502 aa).

The segment at 1–98 (MSVRSTKVTY…DPSIQQVRTE (98 aa)) is head. 4 positions are modified to phosphoserine: serine 13, serine 26, serine 37, and serine 40. Positions 99–134 (EKEQIKTLNNKFASFIDKVRFLEQQNKMLETKWNLL) are coil 1A. In terms of domain architecture, IF rod spans 99–410 (EKEQIKTLNN…KLLEGEESRL (312 aa)). Positions 135-151 (QNQKTTRSNMDGMFEAY) are linker 1. Positions 152–243 (ISNLRRQLDG…QLYEEELREM (92 aa)) are coil 1B. A linker 12 region spans residues 244 to 267 (QSQISDTSVVLSMDNNRSLDLDGI). The segment at 268 to 406 (IAEVRAQYED…ATYRKLLEGE (139 aa)) is coil 2. The interval 269–390 (AEVRAQYEDV…DYQELMNVKL (122 aa)) is necessary for interaction with PNN. The tract at residues 407–502 (ESRLESGFQN…SESSDVFSKP (96 aa)) is tail. Serine 425, serine 428, serine 436, and serine 444 each carry phosphoserine.

The protein belongs to the intermediate filament family. As to quaternary structure, heterotetramer of two type I and two type II keratins. Keratin-8 associates with keratin-18. Expressed in oocytes, eggs, embryos, liver and intestinal mucosa.

It is found in the cytoplasm. It localises to the nucleus. Its subcellular location is the nucleoplasm. The protein localises to the nucleus matrix. Together with KRT19, helps to link the contractile apparatus to dystrophin at the costameres of striated muscle. This chain is Keratin, type II cytoskeletal 8, found in Xenopus laevis (African clawed frog).